We begin with the raw amino-acid sequence, 181 residues long: Putative J domain-containing protein R266 (181 aa).

The J domain maps to 6–70 (NYYQILDVDN…LKRLNYDSYL (65 aa)).

The chain is Putative J domain-containing protein R266 from Acanthamoeba polyphaga (Amoeba).